Here is a 336-residue protein sequence, read N- to C-terminus: Flap endonuclease 1 (336 aa).

The tract at residues 1 to 98 (MGVDLGDILS…GTLAARAQMK (98 aa)) is N-domain. Mg(2+) contacts are provided by Asp-27, Asp-80, Glu-150, Glu-152, Asp-171, Asp-173, and Asp-234. Residues 114 to 255 (DSFRYAQATA…RALKLIREHG (142 aa)) are I-domain. The interaction with PCNA stretch occupies residues 328–336 (GQSTLERWL).

Belongs to the XPG/RAD2 endonuclease family. FEN1 subfamily. Interacts with PCNA. PCNA stimulates the nuclease activity without altering cleavage specificity. Mg(2+) serves as cofactor.

Functionally, structure-specific nuclease with 5'-flap endonuclease and 5'-3' exonuclease activities involved in DNA replication and repair. During DNA replication, cleaves the 5'-overhanging flap structure that is generated by displacement synthesis when DNA polymerase encounters the 5'-end of a downstream Okazaki fragment. Binds the unpaired 3'-DNA end and kinks the DNA to facilitate 5' cleavage specificity. Cleaves one nucleotide into the double-stranded DNA from the junction in flap DNA, leaving a nick for ligation. Also involved in the base excision repair (BER) pathway. Acts as a genome stabilization factor that prevents flaps from equilibrating into structures that lead to duplications and deletions. Also possesses 5'-3' exonuclease activity on nicked or gapped double-stranded DNA. The sequence is that of Flap endonuclease 1 from Methanothrix thermoacetophila (strain DSM 6194 / JCM 14653 / NBRC 101360 / PT) (Methanosaeta thermophila).